A 428-amino-acid polypeptide reads, in one-letter code: Adenylosuccinate synthetase (428 aa).

GTP-binding positions include 11 to 17 and 39 to 41; these read GDEGKGK and GHT. The active-site Proton acceptor is D12. Residues D12 and G39 each contribute to the Mg(2+) site. Residues 12 to 15, 37 to 40, T130, R144, N226, T241, and R305 contribute to the IMP site; these read DEGK and NAGH. H40 functions as the Proton donor in the catalytic mechanism. 301–307 provides a ligand contact to substrate; it reads VTTGRKR. GTP contacts are provided by residues R307, 333–335, and 415–417; these read KLD and GTG.

It belongs to the adenylosuccinate synthetase family. Homodimer. The cofactor is Mg(2+).

The protein resides in the cytoplasm. The catalysed reaction is IMP + L-aspartate + GTP = N(6)-(1,2-dicarboxyethyl)-AMP + GDP + phosphate + 2 H(+). Its pathway is purine metabolism; AMP biosynthesis via de novo pathway; AMP from IMP: step 1/2. Its function is as follows. Plays an important role in the de novo pathway and in the salvage pathway of purine nucleotide biosynthesis. Catalyzes the first committed step in the biosynthesis of AMP from IMP. In Candida tropicalis (strain ATCC MYA-3404 / T1) (Yeast), this protein is Adenylosuccinate synthetase.